The primary structure comprises 71 residues: Pseudonajatoxin b (71 aa).

Cystine bridges form between C3–C21, C14–C42, C27–C31, C46–C58, and C59–C64.

It belongs to the three-finger toxin family. Long-chain subfamily. Type II alpha-neurotoxin sub-subfamily. Expressed by the venom gland.

Its subcellular location is the secreted. Binds with high affinity to muscular (alpha-1/CHRNA1) and neuronal (alpha-7/CHRNA7) nicotinic acetylcholine receptor (nAChR) and inhibits acetylcholine from binding to the receptor, thereby impairing neuromuscular and neuronal transmission. The sequence is that of Pseudonajatoxin b from Pseudonaja textilis (Eastern brown snake).